We begin with the raw amino-acid sequence, 691 residues long: Dipeptidyl-peptidase 5 (691 aa).

A signal peptide spans 1–20; sequence MKRTILSLLAAVSLAIPVYA. Active-site charge relay system residues include Ser-549, Asp-634, and His-666.

This sequence belongs to the peptidase S9C family. In terms of assembly, homodimer.

It is found in the periplasm. Catalyzes the removal of dipeptides from the N-terminus of oligopeptides. Prefers Ala and hydrophobic residues at the P1 position, and has no preference for P2 residues. Shows the highest dipeptidyl peptidase activity toward the synthetic substrate Lys-Ala-methylcoumaryl-7-amide (Lys-Ala-MCA). Is likely involved in amino acid metabolism and bacterial growth/survival of asaccharolytic P.endodontalis, that utilizes amino acids from extracellular proteinaceous nutrients as energy and carbon sources. The polypeptide is Dipeptidyl-peptidase 5 (Porphyromonas endodontalis (strain ATCC 35406 / DSM 24491 / JCM 8526 / CCUG 16442 / BCRC 14492 / NCTC 13058 / HG 370) (Bacteroides endodontalis)).